A 483-amino-acid chain; its full sequence is Putative (R)-citramalate synthase CimA (483 aa).

Residues 1–245 enclose the Pyruvate carboxyltransferase domain; the sequence is MRDGEQTPGV…DTGIKHEQIY (245 aa).

It belongs to the alpha-IPM synthase/homocitrate synthase family. In terms of assembly, homodimer.

It carries out the reaction pyruvate + acetyl-CoA + H2O = (3R)-citramalate + CoA + H(+). It functions in the pathway amino-acid biosynthesis; L-isoleucine biosynthesis; 2-oxobutanoate from pyruvate: step 1/3. Catalyzes the condensation of pyruvate and acetyl-coenzyme A to form (R)-citramalate. The polypeptide is Putative (R)-citramalate synthase CimA (Methanosarcina acetivorans (strain ATCC 35395 / DSM 2834 / JCM 12185 / C2A)).